The following is a 6733-amino-acid chain: Replicase polyprotein 1ab (6733 aa).

Positions 1633–1814 (FNQYYEFKVG…QYIEALGVVE (182 aa)) constitute a Macro domain. The tract at residues 2183-2565 (LTHVNKFKIV…IMLPVFVIIL (383 aa)) is HD1. Helical transmembrane passes span 2191–2211 (IVVY…DFSL), 2219–2239 (VFLL…LGLV), 2266–2286 (GVHW…DFFV), 2411–2431 (ALWF…PLMF), 2521–2541 (VAVS…IVVL), 2546–2566 (FVWF…IILF), 2769–2789 (VMLI…FMVG), 2937–2957 (IISP…FLFL), 2986–3006 (VLFV…LALW), and 3022–3042 (LFIL…GFVF). The segment at 2769–3042 (VMLIIALGAI…FVLIVGGFVF (274 aa)) is HD2. Residues His3184, Glu3222, and Ser3291 each act as charge relay system; for 3C-like serine proteinase activity in the active site. Helical transmembrane passes span 3422–3442 (SNVS…FLVC), 3456–3478 (VVLP…VLFW), 3486–3506 (LAVT…LGLF), 3514–3534 (VGLI…VVVN), 3538–3558 (AIFV…LGVV), 3573–3593 (AVFA…LILF), and 3598–3613 (LMSF…FRVF). Positions 3430–3613 (NLHFIFSVYF…VVIVLSFRVF (184 aa)) are HD3. Positions 4442–4673 (DFKLLRDVWC…AKEMNVPADF (232 aa)) constitute a NiRAN domain. The region spanning 4981 to 5132 (FDVFGSDYTK…FSKPGALKIF (152 aa)) is the RdRp catalytic domain. A CV ZBD domain is found at 5289-5404 (FDRVCFCCPN…NGVAQLLTPV (116 aa)). Positions 5293, 5296, 5304, 5307, 5314, 5317, 5321, 5327, 5336, 5338, 5359, and 5362 each coordinate Zn(2+). In terms of domain architecture, (+)RNA virus helicase ATP-binding spans 5509–5688 (NQPWRLATCF…LQLATQKRYL (180 aa)). The (+)RNA virus helicase C-terminal domain occupies 5689–5848 (TACYRCPPQI…FGMEKQSDFN (160 aa)). The ExoN domain maps to 5846–6059 (DFNIIPEVAS…YLASYDAAFK (214 aa)). Residues Asp5860, Glu5862, and Asp5961 contribute to the active site. His6025, Cys6029, and His6033 together coordinate Zn(2+). Catalysis depends on residues His6037 and Asp6042. Cys6048 is a binding site for Zn(2+). In terms of domain architecture, NendoU spans 6327–6467 (LPETLFSTGR…GEDDIQTFYP (141 aa)). Active-site residues include His6363, His6380, Lys6412, Lys6509, Asp6585, Lys6613, and Glu6647. The Nidovirus-type SAM-dependent 2'-O-MTase domain occupies 6469–6733 (KEFIRSYYEW…EVPLLCQMKH (265 aa)).

Specific enzymatic cleavages in vivo by its own protease yield mature proteins. 3CL-PRO is autocatalytically processed.

It is found in the host membrane. It catalyses the reaction RNA(n) + a ribonucleoside 5'-triphosphate = RNA(n+1) + diphosphate. The enzyme catalyses ATP + H2O = ADP + phosphate + H(+). Functionally, the 3C-like serine proteinase is responsible for the majority of cleavages. The helicase which contains a zinc finger structure displays RNA and DNA duplex-unwinding activities with 5' to 3' polarity. In terms of biological role, acts on both ssRNA and dsRNA in a 3' to 5' direction. Its function is as follows. NendoU is a Mn(2+)-dependent, uridylate-specific enzyme, which leaves 2'-3'-cyclic phosphates 5' to the cleaved bond. This is Replicase polyprotein 1ab (rep) from Bos taurus (Bovine).